The primary structure comprises 467 residues: Putative ankyrin repeat protein R911 (467 aa).

14 ANK repeats span residues 38–70 (IKTD…PIIV), 79–108 (TLNK…DIRA), 109–138 (GNDY…DIRA), 140–168 (NDYA…NIRA), 170–198 (NDHA…DIRS), 199–228 (DNDY…NIRS), 229–258 (DNDY…DIKS), 260–288 (NDYA…NIRV), 289–318 (NNNY…DIIA), 320–348 (NNFA…DIKS), 350–378 (NDYA…DIRV), 379–408 (ENDY…DIRS), 410–438 (NDYA…DIKA), and 440–467 (DDYA…AVLS).

The protein is Putative ankyrin repeat protein R911 of Acanthamoeba polyphaga mimivirus (APMV).